Consider the following 120-residue polypeptide: Large ribosomal subunit protein uL24 (120 aa).

The disordered stretch occupies residues 1–33; the sequence is MTRQPHKQRNRQERAALHEKQKQVRAPLSPELR. Over residues 10-22 the composition is skewed to basic and acidic residues; it reads NRQERAALHEKQK.

Belongs to the universal ribosomal protein uL24 family. Part of the 50S ribosomal subunit.

Its function is as follows. One of two assembly initiator proteins, it binds directly to the 5'-end of the 23S rRNA, where it nucleates assembly of the 50S subunit. Functionally, located at the polypeptide exit tunnel on the outside of the subunit. This is Large ribosomal subunit protein uL24 from Natronomonas pharaonis (strain ATCC 35678 / DSM 2160 / CIP 103997 / JCM 8858 / NBRC 14720 / NCIMB 2260 / Gabara) (Halobacterium pharaonis).